Reading from the N-terminus, the 508-residue chain is Glycerol kinase (508 aa).

Residue Thr14 participates in ADP binding. The ATP site is built by Thr14, Thr15, and Ser16. Thr14 is a sn-glycerol 3-phosphate binding site. Arg18 provides a ligand contact to ADP. Arg84, Glu85, Tyr136, and Asp245 together coordinate sn-glycerol 3-phosphate. Residues Arg84, Glu85, Tyr136, Asp245, and Gln246 each coordinate glycerol. ADP contacts are provided by Thr267 and Gly314. ATP contacts are provided by Thr267, Gly314, Gln318, and Gly415. ADP is bound by residues Gly415 and Asn419.

It belongs to the FGGY kinase family.

It carries out the reaction glycerol + ATP = sn-glycerol 3-phosphate + ADP + H(+). The protein operates within polyol metabolism; glycerol degradation via glycerol kinase pathway; sn-glycerol 3-phosphate from glycerol: step 1/1. Inhibited by fructose 1,6-bisphosphate (FBP). Functionally, key enzyme in the regulation of glycerol uptake and metabolism. Catalyzes the phosphorylation of glycerol to yield sn-glycerol 3-phosphate. This Bordetella parapertussis (strain 12822 / ATCC BAA-587 / NCTC 13253) protein is Glycerol kinase.